A 155-amino-acid polypeptide reads, in one-letter code: Ribosomal RNA large subunit methyltransferase H 1 (155 aa).

Residues Leu-76, Gly-108, and Phe-127–Phe-132 each bind S-adenosyl-L-methionine.

It belongs to the RNA methyltransferase RlmH family. As to quaternary structure, homodimer.

The protein localises to the cytoplasm. The enzyme catalyses pseudouridine(1915) in 23S rRNA + S-adenosyl-L-methionine = N(3)-methylpseudouridine(1915) in 23S rRNA + S-adenosyl-L-homocysteine + H(+). In terms of biological role, specifically methylates the pseudouridine at position 1915 (m3Psi1915) in 23S rRNA. This chain is Ribosomal RNA large subunit methyltransferase H 1, found in Thermoanaerobacter pseudethanolicus (strain ATCC 33223 / 39E) (Clostridium thermohydrosulfuricum).